An 85-amino-acid polypeptide reads, in one-letter code: Large ribosomal subunit protein bL27 (85 aa).

Residues 1–23 (MAHKKAGGSSRNGRDSESKRLGV) are disordered.

Belongs to the bacterial ribosomal protein bL27 family.

The sequence is that of Large ribosomal subunit protein bL27 from Methylococcus capsulatus (strain ATCC 33009 / NCIMB 11132 / Bath).